Here is a 388-residue protein sequence, read N- to C-terminus: Putrescine N-methyltransferase 1 (388 aa).

3 stretches are compositionally biased toward polar residues: residues 1–14, 23–39, and 46–88; these read MEVI…STIF, GYQN…QNGT, and HQNG…GNEL. The disordered stretch occupies residues 1–88; sequence MEVISTNTNG…TISHDNGNEL (88 aa). The PABS domain occupies 99 to 336; that stretch reads PGWFSEFSAL…GVIGYMLCST (238 aa). S-adenosyl-L-methionine-binding positions include glutamine 130, glutamate 205, and 236-237; that span reads DG. Aspartate 255 (proton acceptor) is an active-site residue. Residue tyrosine 324 participates in S-adenosyl-L-methionine binding.

It belongs to the class I-like SAM-binding methyltransferase superfamily. Spermidine/spermine synthase family. Mainly expressed in roots.

The catalysed reaction is putrescine + S-adenosyl-L-methionine = N-methylputrescine + S-adenosyl-L-homocysteine + H(+). It participates in alkaloid biosynthesis; nicotine biosynthesis. Its function is as follows. Involved in the biosynthesis of pyridine alkaloid natural products, leading mainly to the production of anabasine, anatabine, nicotine and nornicotine, effective deterrents against herbivores with antiparasitic and pesticide properties (neurotoxins); nornicotine serves as the precursor in the synthesis of the carcinogen compound N'-nitrosonornicotine (NNN). Methyltransferase that mediates the conversion of putrescine to N-methylputrescine. This is Putrescine N-methyltransferase 1 from Nicotiana attenuata (Coyote tobacco).